The primary structure comprises 346 residues: MGNSRNKRGKREANRQRTVEALARAQSGADTGAALQLPQKKFYRQRAHANPFSDHQLKYPLSPAHMDWASHYPAFENPDPAQTNLGGFRKLLKDVEVVDIGCGFGGLLIGLAPLLPETLIVGMEIRIQVLDYVNTRIQALRTQQRHFKLKSAGGGGSDAAPESPAAPPTPSEAASPDSTTPSEQQAPTTLVPGGFQNISAIRSNTMKFFPNFFGRGQLSKIFICFPDPHFKARKHKMRIISETLNAEYAYALRPGGLLYTITDVEEYHHWILRHFREPEVDGAVPCDDGADGIKELFERVSDEELQQDPCVEVMREATEEGKKVSRNKGNKYVAVFRRKADPEWPA.

Residues Gly-101 and 124–125 (EI) each bind S-adenosyl-L-methionine. A disordered region spans residues 149-191 (LKSAGGGGSDAAPESPAAPPTPSEAASPDSTTPSEQQAPTTLV). A compositionally biased stretch (low complexity) spans 171–182 (SEAASPDSTTPS). S-adenosyl-L-methionine-binding positions include 204–205 (NT) and Cys-224. The active site involves Asp-227. 318 to 320 (TEE) contacts S-adenosyl-L-methionine.

This sequence belongs to the class I-like SAM-binding methyltransferase superfamily. TrmB family. Forms a complex with trm82.

The protein localises to the nucleus. It catalyses the reaction guanosine(46) in tRNA + S-adenosyl-L-methionine = N(7)-methylguanosine(46) in tRNA + S-adenosyl-L-homocysteine. It participates in tRNA modification; N(7)-methylguanine-tRNA biosynthesis. In terms of biological role, catalyzes the formation of N(7)-methylguanine at position 46 (m7G46) in tRNA. The sequence is that of tRNA (guanine-N(7)-)-methyltransferase (trm8) from Aspergillus terreus (strain NIH 2624 / FGSC A1156).